The sequence spans 967 residues: RNA polymerase-associated protein RapA (967 aa).

In terms of domain architecture, Helicase ATP-binding spans 163–337 (EVGQRTAPRV…FARLSLLDPD (175 aa)). An ATP-binding site is contributed by 176 to 183 (DEVGLGKT). The DEAH box motif lies at 283–286 (DEAH). The region spanning 489 to 660 (RLEWLITFLK…KFLQNPTALE (172 aa)) is the Helicase C-terminal domain.

The protein belongs to the SNF2/RAD54 helicase family. RapA subfamily. In terms of assembly, interacts with the RNAP. Has a higher affinity for the core RNAP than for the holoenzyme. Its ATPase activity is stimulated by binding to RNAP.

Transcription regulator that activates transcription by stimulating RNA polymerase (RNAP) recycling in case of stress conditions such as supercoiled DNA or high salt concentrations. Probably acts by releasing the RNAP, when it is trapped or immobilized on tightly supercoiled DNA. Does not activate transcription on linear DNA. Probably not involved in DNA repair. The chain is RNA polymerase-associated protein RapA from Pasteurella multocida (strain Pm70).